A 586-amino-acid polypeptide reads, in one-letter code: A-type ATP synthase subunit A (586 aa).

232-239 (GPFGSGKT) contributes to the ATP binding site.

It belongs to the ATPase alpha/beta chains family. Has multiple subunits with at least A(3), B(3), C, D, E, F, H, I and proteolipid K(x).

The protein resides in the cell membrane. The catalysed reaction is ATP + H2O + 4 H(+)(in) = ADP + phosphate + 5 H(+)(out). Functionally, component of the A-type ATP synthase that produces ATP from ADP in the presence of a proton gradient across the membrane. The A chain is the catalytic subunit. The polypeptide is A-type ATP synthase subunit A (Methanococcus maripaludis (strain DSM 14266 / JCM 13030 / NBRC 101832 / S2 / LL)).